Reading from the N-terminus, the 402-residue chain is Enoyl-[acyl-carrier-protein] reductase [NADH] (402 aa).

NAD(+)-binding positions include 48-53 (GASSGY), 74-75 (FE), 111-112 (DA), and 140-141 (LA). Residue Y226 participates in substrate binding. The active-site Proton donor is the Y236. NAD(+) is bound by residues K245 and 274–276 (VVT).

The protein belongs to the TER reductase family. Monomer.

It carries out the reaction a 2,3-saturated acyl-[ACP] + NAD(+) = a (2E)-enoyl-[ACP] + NADH + H(+). Its pathway is lipid metabolism; fatty acid biosynthesis. Its function is as follows. Involved in the final reduction of the elongation cycle of fatty acid synthesis (FAS II). Catalyzes the reduction of a carbon-carbon double bond in an enoyl moiety that is covalently linked to an acyl carrier protein (ACP). This is Enoyl-[acyl-carrier-protein] reductase [NADH] from Xanthomonas campestris pv. campestris (strain 8004).